The sequence spans 304 residues: tRNA pseudouridine synthase B (304 aa).

The active-site Nucleophile is Asp38.

Belongs to the pseudouridine synthase TruB family. Type 1 subfamily.

The catalysed reaction is uridine(55) in tRNA = pseudouridine(55) in tRNA. In terms of biological role, responsible for synthesis of pseudouridine from uracil-55 in the psi GC loop of transfer RNAs. This chain is tRNA pseudouridine synthase B, found in Listeria monocytogenes serovar 1/2a (strain ATCC BAA-679 / EGD-e).